Here is a 270-residue protein sequence, read N- to C-terminus: Pyrroline-5-carboxylate reductase (270 aa).

Belongs to the pyrroline-5-carboxylate reductase family.

Its subcellular location is the cytoplasm. It carries out the reaction L-proline + NADP(+) = (S)-1-pyrroline-5-carboxylate + NADPH + 2 H(+). It catalyses the reaction L-proline + NAD(+) = (S)-1-pyrroline-5-carboxylate + NADH + 2 H(+). Its pathway is amino-acid biosynthesis; L-proline biosynthesis; L-proline from L-glutamate 5-semialdehyde: step 1/1. Catalyzes the reduction of 1-pyrroline-5-carboxylate (PCA) to L-proline. The polypeptide is Pyrroline-5-carboxylate reductase (Methanosarcina acetivorans (strain ATCC 35395 / DSM 2834 / JCM 12185 / C2A)).